The sequence spans 743 residues: Phosphoribosylformylglycinamidine synthase subunit PurL (743 aa).

The active site involves His50. 2 residues coordinate ATP: Tyr53 and Lys92. Residue Glu94 coordinates Mg(2+). Substrate contacts are provided by residues 95–98 (SHNH) and Arg117. His96 (proton acceptor) is an active-site residue. Asp118 lines the Mg(2+) pocket. Residue Gln241 participates in substrate binding. Asp269 provides a ligand contact to Mg(2+). 313 to 315 (ESQ) provides a ligand contact to substrate. ATP contacts are provided by Asp494 and Gly531. Asn532 provides a ligand contact to Mg(2+). Ser534 lines the substrate pocket.

This sequence belongs to the FGAMS family. As to quaternary structure, monomer. Part of the FGAM synthase complex composed of 1 PurL, 1 PurQ and 2 PurS subunits.

It localises to the cytoplasm. It carries out the reaction N(2)-formyl-N(1)-(5-phospho-beta-D-ribosyl)glycinamide + L-glutamine + ATP + H2O = 2-formamido-N(1)-(5-O-phospho-beta-D-ribosyl)acetamidine + L-glutamate + ADP + phosphate + H(+). It participates in purine metabolism; IMP biosynthesis via de novo pathway; 5-amino-1-(5-phospho-D-ribosyl)imidazole from N(2)-formyl-N(1)-(5-phospho-D-ribosyl)glycinamide: step 1/2. Functionally, part of the phosphoribosylformylglycinamidine synthase complex involved in the purines biosynthetic pathway. Catalyzes the ATP-dependent conversion of formylglycinamide ribonucleotide (FGAR) and glutamine to yield formylglycinamidine ribonucleotide (FGAM) and glutamate. The FGAM synthase complex is composed of three subunits. PurQ produces an ammonia molecule by converting glutamine to glutamate. PurL transfers the ammonia molecule to FGAR to form FGAM in an ATP-dependent manner. PurS interacts with PurQ and PurL and is thought to assist in the transfer of the ammonia molecule from PurQ to PurL. This is Phosphoribosylformylglycinamidine synthase subunit PurL from Sinorhizobium fredii (strain HH103).